The following is a 207-amino-acid chain: Large ribosomal subunit protein uL4 (207 aa).

The interval 45 to 78 (RQGTHAVKNRSARRGGGRKPWRQKGTGRARQGSI) is disordered. Basic residues predominate over residues 51-71 (VKNRSARRGGGRKPWRQKGTG).

It belongs to the universal ribosomal protein uL4 family. As to quaternary structure, part of the 50S ribosomal subunit.

Functionally, one of the primary rRNA binding proteins, this protein initially binds near the 5'-end of the 23S rRNA. It is important during the early stages of 50S assembly. It makes multiple contacts with different domains of the 23S rRNA in the assembled 50S subunit and ribosome. Its function is as follows. Forms part of the polypeptide exit tunnel. The protein is Large ribosomal subunit protein uL4 of Lactiplantibacillus plantarum (strain ATCC BAA-793 / NCIMB 8826 / WCFS1) (Lactobacillus plantarum).